We begin with the raw amino-acid sequence, 253 residues long: Sporulated oocyst TA4 antigen (253 aa).

Residues 1-23 (MARLSFVSLLSLSLLFGQQAVRA) form the signal peptide. Residues 182–184 (RRL) constitute a propeptide, removed in mature form.

As to quaternary structure, the TA4 antigen is composed of a 17 kDa and a 8 kDa chain, linked by a disulfide bond.

The polypeptide is Sporulated oocyst TA4 antigen (Eimeria tenella (Coccidian parasite)).